Here is a 136-residue protein sequence, read N- to C-terminus: DNA-binding protein H-NS (136 aa).

Residues Thr13–Ala67 adopt a coiled-coil conformation. A DNA-binding region spans residues Gln113 to Ala118.

This sequence belongs to the histone-like protein H-NS family. In terms of assembly, interacts with YmoA in the absence of DNA. Homodimer that oligomerizes on DNA into higher-order complexes that form bridges between disparate regions of DNA compacting it. Interacts with YmoA.

The protein localises to the cytoplasm. The protein resides in the nucleoid. Functionally, a DNA-binding protein implicated in transcriptional repression and chromosome organization and compaction. Binds nucleation sites in AT-rich DNA and bridges them, forming higher-order nucleoprotein complexes and condensing the chromosome. As many horizontally transferred genes are AT-rich, it plays a central role in silencing foreign genes. A subset of genes are repressed by H-NS in association with YmoA. Complements a number of hns deficiencies in E.coli; represses the bgl operon, represses hemolysin expression. In Yersinia enterocolitica, this protein is DNA-binding protein H-NS.